Consider the following 417-residue polypeptide: 1-deoxy-D-xylulose 5-phosphate reductoisomerase (417 aa).

8 residues coordinate NADPH: Thr10, Gly11, Ser12, Ile13, Gly36, Arg37, Asn38, and Asn130. Lys131 is a binding site for 1-deoxy-D-xylulose 5-phosphate. Glu132 provides a ligand contact to NADPH. Asp156 is a binding site for Mn(2+). Ser157, Glu158, Ser194, and His217 together coordinate 1-deoxy-D-xylulose 5-phosphate. Glu158 is a Mn(2+) binding site. Gly223 lines the NADPH pocket. 1-deoxy-D-xylulose 5-phosphate-binding residues include Ser230, Asn235, Lys236, and Glu239. Mn(2+) is bound at residue Glu239.

Belongs to the DXR family. Mg(2+) is required as a cofactor. Mn(2+) serves as cofactor.

The enzyme catalyses 2-C-methyl-D-erythritol 4-phosphate + NADP(+) = 1-deoxy-D-xylulose 5-phosphate + NADPH + H(+). It functions in the pathway isoprenoid biosynthesis; isopentenyl diphosphate biosynthesis via DXP pathway; isopentenyl diphosphate from 1-deoxy-D-xylulose 5-phosphate: step 1/6. Catalyzes the NADPH-dependent rearrangement and reduction of 1-deoxy-D-xylulose-5-phosphate (DXP) to 2-C-methyl-D-erythritol 4-phosphate (MEP). This chain is 1-deoxy-D-xylulose 5-phosphate reductoisomerase, found in Synechococcus sp. (strain CC9902).